Here is a 678-residue protein sequence, read N- to C-terminus: MRPSQTALWLGLVLSLALLAVGWASARPPIYVSSWAVRVTKGYQEAERLARKFGFVNLGQIFPDDQYFHLRHRGVAQQSLTPHWGHRLRLKKEPKVRWFEQQTLRRRVKRSLVVPTDPWFSKQWYMNKEIEQDLNILKVWNQGLTGRGVVVSILDDGIEKDHPDLWANYDPLASYDFNDYDPDPQPRYTPNDENRHGTRCAGEVSATANNGFCGAGVAFNARIGGVRMLDGAITDIVEAQSLSLQPQHIHIYSASWGPEDDGRTVDGPGLLTQEAFRRGVTKGRQGLGTLFIWASGNGGLHYDNCNCDGYTNSIHTLSVGSTTRQGRVPWYSEACASTFTTTFSSGVVTDPQIVTTDLHHQCTDKHTGTSASAPLAAGMIALALEANPLLTWRDLQHLVVRASRPAQLQAEDWRINGVGRQVSHHYGYGLLDAGLLVDLARVWLPTKPQKKCTIRVVHTPTPILPRMLVPKNVTVCCDGSRRRLIRSLEHVQVQLSLSYSRRGDLEIFLTSPMGTRSTLVAIRPLDISGQGYNNWIFMSTHYWDEDPQGLWTLGLENKGYYYNTGTLYYCTLLLYGTAEDMTARPQTPQESHCPLSIVAELCLISSKQWWWLYSHTQQPVTKGQDSCHPPTTPARQLDQRLHCLFPAPHAGSASEPLQGLSPLAAILAISLGPWCCPC.

The signal sequence occupies residues 1-26; sequence MRPSQTALWLGLVLSLALLAVGWASA. A propeptide spanning residues 27-110 is cleaved from the precursor; sequence RPPIYVSSWA…QQTLRRRVKR (84 aa). The region spanning 123–437 is the Peptidase S8 domain; it reads QWYMNKEIEQ…YGLLDAGLLV (315 aa). Catalysis depends on charge relay system residues D155, H196, and S370. The 135-residue stretch at 446-580 folds into the P/Homo B domain; it reads TKPQKKCTIR…TLLLYGTAED (135 aa). N472 carries an N-linked (GlcNAc...) asparagine glycan.

This sequence belongs to the peptidase S8 family. Furin subfamily. The proPCSK4 form interacts with HSPA5; the interaction takes place at the endoplasmic reticulum. N-glycosylated. In terms of processing, synthesized in the endoplasmic reticulum as a zymogen, is matured by autocatalytic cleavage between the prodomain and the catalytic domain. As to expression, expressed abundantly in the testis. High levels seen in germ cells but not in Leydig, Sertoli or peritubular cells. Expressed in the pachytene spermatocytes and the round spermatids but not in the elongating spermatids. May be expressed within hormonally stimulated ovaries.

The protein localises to the cytoplasmic vesicle. It localises to the secretory vesicle. It is found in the acrosome membrane. Functionally, proprotein convertase involved in the processing of hormone and other protein precursors at sites comprised of pairs of basic amino acid residues. In males, important for ADAM2 processing as well as other acrosomal proteins with roles in fertilization and critical for normal fertilization events such as sperm capacitation, acrosome reaction and binding of sperm to zona pellucida. Plays also a role in female fertility, involved in the regulation of trophoblast migration and placental development, may be through the proteolytical processing and activation of proteins such as IGF2. May also participate in folliculogenesis in the ovaries. This chain is Proprotein convertase subtilisin/kexin type 4 (Pcsk4), found in Rattus norvegicus (Rat).